Here is a 113-residue protein sequence, read N- to C-terminus: Death-associated protein-like 1.L (113 aa).

A disordered region spans residues 1-57; that stretch reads MAKEQKMQSSPQALKAGHLPAVKAGGMRVSKKQGNEENSAPEKNAKKTLQEKPSSVL.

It belongs to the DAP-DAPL1 family. Associates with ribosomes; preventing translation. Interacts with eiF5a (eif5a and eif5a2); preventing translation.

In terms of biological role, ribosome-binding protein that promotes ribosome hibernation, a process during which ribosomes are stabilized in an inactive state and preserved from proteasomal degradation. Acts via its association with eiF5a (eif5a and eif5a2) at the polypeptide exit tunnel of the ribosome, preventing mRNA translation. Plays a key role in ribosome hibernation in the mature egg by preventing mRNA translation, leading to ribosome inactivation. Ribosomes, which are produced in large quantities during oogenesis, are stored and translationally repressed in the egg and early embryo. The sequence is that of Death-associated protein-like 1.L (dapl1.L) from Xenopus laevis (African clawed frog).